We begin with the raw amino-acid sequence, 215 residues long: ER lumen protein-retaining receptor A (215 aa).

Topologically, residues 1-2 are lumenal; that stretch reads MN. Residues 3–21 traverse the membrane as a helical segment; it reads IFRFAGDMSHLISVLILLL. The Cytoplasmic portion of the chain corresponds to 22-35; the sequence is KIYATKSCAGISLK. Residues 36–53 traverse the membrane as a helical segment; it reads TQELYALVFLTRYLDLFT. Residues 54-61 lie on the Lumenal side of the membrane; it reads DYVSLYNS. The helical transmembrane segment at 62–82 threads the bilayer; the sequence is IMKIVFIASSLAIVWCMRRHP. At 83 to 98 the chain is on the cytoplasmic side; sequence LVRRSYDKDLDTFRHQ. Residues 99-112 traverse the membrane as a helical segment; that stretch reads YVVLACFVLGLILN. Topologically, residues 113–119 are lumenal; sequence EKFTVQE. Residues 120 to 139 traverse the membrane as a helical segment; it reads VFWAFSIYLEAVAILPQLVL. Over 140 to 151 the chain is Cytoplasmic; it reads LQRSGNVDNLTG. The chain crosses the membrane as a helical span at residues 152–170; the sequence is QYVVFLGAYRGLYIINWIY. Over 171-181 the chain is Lumenal; sequence RYFTEDHFTRW. Residues 182 to 202 form a helical membrane-spanning segment; the sequence is IACVSGLVQTALYADFFYYYY. Over 203 to 215 the chain is Cytoplasmic; that stretch reads ISWKTNTKLKLPA.

This sequence belongs to the ERD2 family.

It localises to the endoplasmic reticulum membrane. Its function is as follows. Required for the retention of luminal endoplasmic reticulum proteins. Determines the specificity of the luminal ER protein retention system. Also required for normal vesicular traffic through the Golgi. This receptor recognizes H-D-E-L. This is ER lumen protein-retaining receptor A (ERD2A) from Arabidopsis thaliana (Mouse-ear cress).